A 206-amino-acid chain; its full sequence is Proteasome subunit beta 2 (206 aa).

Residues 1 to 10 constitute a propeptide, removed in mature form; by autocatalysis; it reads MLHLKEKLKG. Thr11 functions as the Nucleophile in the catalytic mechanism.

The protein belongs to the peptidase T1B family. The 20S proteasome core is composed of 14 alpha and 14 beta subunits that assemble into four stacked heptameric rings, resulting in a barrel-shaped structure. The two inner rings, each composed of seven catalytic beta subunits, are sandwiched by two outer rings, each composed of seven alpha subunits. The catalytic chamber with the active sites is on the inside of the barrel. Has a gated structure, the ends of the cylinder being occluded by the N-termini of the alpha-subunits. Is capped at one or both ends by the proteasome regulatory ATPase, PAN.

It is found in the cytoplasm. The enzyme catalyses Cleavage of peptide bonds with very broad specificity.. The formation of the proteasomal ATPase PAN-20S proteasome complex, via the docking of the C-termini of PAN into the intersubunit pockets in the alpha-rings, triggers opening of the gate for substrate entry. Interconversion between the open-gate and close-gate conformations leads to a dynamic regulation of the 20S proteasome proteolysis activity. In terms of biological role, component of the proteasome core, a large protease complex with broad specificity involved in protein degradation. This chain is Proteasome subunit beta 2, found in Pyrococcus furiosus (strain ATCC 43587 / DSM 3638 / JCM 8422 / Vc1).